A 102-amino-acid polypeptide reads, in one-letter code: Citrate lyase acyl carrier protein (102 aa).

O-(phosphoribosyl dephospho-coenzyme A)serine is present on Ser14.

It belongs to the CitD family. In terms of assembly, oligomer with a subunit composition of (alpha,beta,gamma)6.

The protein resides in the cytoplasm. Its function is as follows. Covalent carrier of the coenzyme of citrate lyase. This chain is Citrate lyase acyl carrier protein, found in Streptococcus pyogenes serotype M18 (strain MGAS8232).